The primary structure comprises 318 residues: ATP phosphoribosyltransferase regulatory subunit (318 aa).

It belongs to the class-II aminoacyl-tRNA synthetase family. HisZ subfamily. Heteromultimer composed of HisG and HisZ subunits.

The protein resides in the cytoplasm. The protein operates within amino-acid biosynthesis; L-histidine biosynthesis; L-histidine from 5-phospho-alpha-D-ribose 1-diphosphate: step 1/9. Functionally, required for the first step of histidine biosynthesis. May allow the feedback regulation of ATP phosphoribosyltransferase activity by histidine. The sequence is that of ATP phosphoribosyltransferase regulatory subunit from Lactococcus lactis subsp. cremoris (strain MG1363).